The chain runs to 235 residues: Large ribosomal subunit protein uL3 (235 aa).

This sequence belongs to the universal ribosomal protein uL3 family. Part of the 50S ribosomal subunit. Forms a cluster with proteins L14 and L19.

Its function is as follows. One of the primary rRNA binding proteins, it binds directly near the 3'-end of the 23S rRNA, where it nucleates assembly of the 50S subunit. The sequence is that of Large ribosomal subunit protein uL3 from Frankia casuarinae (strain DSM 45818 / CECT 9043 / HFP020203 / CcI3).